The following is a 355-amino-acid chain: Proto-oncogene Wnt-3 (355 aa).

The first 21 residues, 1–21 (MEPHLLGLLLGLLLGGTRVLA), serve as a signal peptide directing secretion. 11 disulfides stabilise this stretch: C80/C91, C131/C139, C141/C158, C206/C220, C208/C215, C284/C315, C300/C310, C314/C354, C330/C345, C332/C342, and C337/C338. N-linked (GlcNAc...) asparagine glycosylation occurs at N90. S212 carries the O-palmitoleoyl serine; by PORCN lipid modification. A glycan (N-linked (GlcNAc...) asparagine) is linked at N301.

It belongs to the Wnt family. Forms a soluble 1:1 complex with AFM; this prevents oligomerization and is required for prolonged biological activity. The complex with AFM may represent the physiological form in body fluids. Interacts with PORCN. Interacts with WLS. Palmitoleoylation is required for efficient binding to frizzled receptors. Depalmitoleoylation leads to Wnt signaling pathway inhibition.

It is found in the secreted. It localises to the extracellular space. Its subcellular location is the extracellular matrix. In terms of biological role, ligand for members of the frizzled family of seven transmembrane receptors. Functions in the canonical Wnt signaling pathway that results in activation of transcription factors of the TCF/LEF family. Required for normal gastrulation, formation of the primitive streak, and for the formation of the mesoderm during early embryogenesis. Required for normal formation of the apical ectodermal ridge. Required for normal embryonic development, and especially for limb development. The chain is Proto-oncogene Wnt-3 (WNT3) from Homo sapiens (Human).